Reading from the N-terminus, the 294-residue chain is Elongation factor Ts (294 aa).

The segment at 79–82 (TDFV) is involved in Mg(2+) ion dislocation from EF-Tu.

The protein belongs to the EF-Ts family.

The protein resides in the cytoplasm. Functionally, associates with the EF-Tu.GDP complex and induces the exchange of GDP to GTP. It remains bound to the aminoacyl-tRNA.EF-Tu.GTP complex up to the GTP hydrolysis stage on the ribosome. This is Elongation factor Ts from Geobacillus thermodenitrificans (strain NG80-2).